The chain runs to 172 residues: Sec-independent protein translocase protein TatB (172 aa).

The helical transmembrane segment at 1-21 (MFDIGWSELLVIGVVALIAIG) threads the bilayer.

Belongs to the TatB family. In terms of assembly, the Tat system comprises two distinct complexes: a TatABC complex, containing multiple copies of TatA, TatB and TatC subunits, and a separate TatA complex, containing only TatA subunits. Substrates initially bind to the TatABC complex, which probably triggers association of the separate TatA complex to form the active translocon.

The protein resides in the cell inner membrane. Its function is as follows. Part of the twin-arginine translocation (Tat) system that transports large folded proteins containing a characteristic twin-arginine motif in their signal peptide across membranes. Together with TatC, TatB is part of a receptor directly interacting with Tat signal peptides. TatB may form an oligomeric binding site that transiently accommodates folded Tat precursor proteins before their translocation. The chain is Sec-independent protein translocase protein TatB from Rhodopseudomonas palustris (strain BisB18).